Here is a 103-residue protein sequence, read N- to C-terminus: Small ribosomal subunit protein eS24 (103 aa).

It belongs to the eukaryotic ribosomal protein eS24 family.

The chain is Small ribosomal subunit protein eS24 from Methanococcus maripaludis (strain C6 / ATCC BAA-1332).